We begin with the raw amino-acid sequence, 205 residues long: tRNA (guanine-N(7)-)-methyltransferase (205 aa).

The S-adenosyl-L-methionine site is built by E34, E59, D86, and D107. The active site involves D107. K111 contacts substrate. Positions 113–118 (RHEKRR) are interaction with RNA. Substrate contacts are provided by residues D144 and 182 to 185 (TGYE).

This sequence belongs to the class I-like SAM-binding methyltransferase superfamily. TrmB family.

It catalyses the reaction guanosine(46) in tRNA + S-adenosyl-L-methionine = N(7)-methylguanosine(46) in tRNA + S-adenosyl-L-homocysteine. It participates in tRNA modification; N(7)-methylguanine-tRNA biosynthesis. In terms of biological role, catalyzes the formation of N(7)-methylguanine at position 46 (m7G46) in tRNA. In Mycoplasmopsis synoviae (strain 53) (Mycoplasma synoviae), this protein is tRNA (guanine-N(7)-)-methyltransferase.